Here is a 456-residue protein sequence, read N- to C-terminus: NADPH-ferredoxin reductase FprA (456 aa).

FAD contacts are provided by serine 14, glutamate 40, leucine 48, and valine 84. Residues arginine 110, 155–158 (NGNV), 199–200 (RR), and glutamate 211 contribute to the NADP(+) site. FAD is bound by residues tryptophan 359 and 366–368 (GVI). An NADP(+)-binding site is contributed by glycine 366.

The protein belongs to the ferredoxin--NADP reductase type 1 family. Monomer. It depends on FAD as a cofactor.

It catalyses the reaction 2 reduced [2Fe-2S]-[ferredoxin] + NADP(+) + H(+) = 2 oxidized [2Fe-2S]-[ferredoxin] + NADPH. Functionally, may serve as electron transfer protein and supply electrons to P450 systems. The polypeptide is NADPH-ferredoxin reductase FprA (fprA) (Mycobacterium tuberculosis (strain CDC 1551 / Oshkosh)).